Consider the following 485-residue polypeptide: Glutamyl-tRNA(Gln) amidotransferase subunit A (485 aa).

Catalysis depends on charge relay system residues K79 and S154. The active-site Acyl-ester intermediate is the S178.

It belongs to the amidase family. GatA subfamily. Heterotrimer of A, B and C subunits.

The enzyme catalyses L-glutamyl-tRNA(Gln) + L-glutamine + ATP + H2O = L-glutaminyl-tRNA(Gln) + L-glutamate + ADP + phosphate + H(+). In terms of biological role, allows the formation of correctly charged Gln-tRNA(Gln) through the transamidation of misacylated Glu-tRNA(Gln) in organisms which lack glutaminyl-tRNA synthetase. The reaction takes place in the presence of glutamine and ATP through an activated gamma-phospho-Glu-tRNA(Gln). This chain is Glutamyl-tRNA(Gln) amidotransferase subunit A, found in Bacillus pumilus (strain SAFR-032).